The sequence spans 504 residues: Maturase K (504 aa).

It belongs to the intron maturase 2 family. MatK subfamily.

Its subcellular location is the plastid. It is found in the chloroplast. Usually encoded in the trnK tRNA gene intron. Probably assists in splicing its own and other chloroplast group II introns. The chain is Maturase K from Vauquelinia californica (Arizona rosewood).